A 399-amino-acid polypeptide reads, in one-letter code: Protochlorophyllide reductase, chloroplastic (399 aa).

Residues 1 to 64 constitute a chloroplast transit peptide; that stretch reads MALQTASMLP…RQKVGAVRAE (64 aa).

The protein belongs to the short-chain dehydrogenases/reductases (SDR) family. POR subfamily.

The protein resides in the plastid. Its subcellular location is the chloroplast. The catalysed reaction is chlorophyllide a + NADP(+) = protochlorophyllide a + NADPH + H(+). It functions in the pathway porphyrin-containing compound metabolism; chlorophyll biosynthesis. In terms of biological role, phototransformation of protochlorophyllide (Pchlide) to chlorophyllide (Chlide). The sequence is that of Protochlorophyllide reductase, chloroplastic (3PCR) from Pisum sativum (Garden pea).